We begin with the raw amino-acid sequence, 849 residues long: Alanine--tRNA ligase (849 aa).

His551, His555, Cys653, and His657 together coordinate Zn(2+).

This sequence belongs to the class-II aminoacyl-tRNA synthetase family. It depends on Zn(2+) as a cofactor.

It localises to the cytoplasm. The catalysed reaction is tRNA(Ala) + L-alanine + ATP = L-alanyl-tRNA(Ala) + AMP + diphosphate. Its function is as follows. Catalyzes the attachment of alanine to tRNA(Ala) in a two-step reaction: alanine is first activated by ATP to form Ala-AMP and then transferred to the acceptor end of tRNA(Ala). Also edits incorrectly charged Ser-tRNA(Ala) and Gly-tRNA(Ala) via its editing domain. This is Alanine--tRNA ligase from Sulfurimonas denitrificans (strain ATCC 33889 / DSM 1251) (Thiomicrospira denitrificans (strain ATCC 33889 / DSM 1251)).